The chain runs to 458 residues: Argininosuccinate lyase (458 aa).

This sequence belongs to the lyase 1 family. Argininosuccinate lyase subfamily.

It localises to the cytoplasm. The enzyme catalyses 2-(N(omega)-L-arginino)succinate = fumarate + L-arginine. It participates in amino-acid biosynthesis; L-arginine biosynthesis; L-arginine from L-ornithine and carbamoyl phosphate: step 3/3. The polypeptide is Argininosuccinate lyase (Acetivibrio thermocellus (strain ATCC 27405 / DSM 1237 / JCM 9322 / NBRC 103400 / NCIMB 10682 / NRRL B-4536 / VPI 7372) (Clostridium thermocellum)).